The sequence spans 603 residues: Matrix metalloproteinase-17 (603 aa).

The signal sequence occupies residues 1–35 (MRRRAARGPGPPPPGPGLSRLPLPLLLLLALGTRG). Positions 36 to 125 (GCAAPAPAPR…PVLTQARRRR (90 aa)) are excised as a propeptide. The Cysteine switch signature appears at 108–115 (PRCSLPDL). Cys110 serves as a coordination point for Zn(2+). N-linked (GlcNAc...) asparagine glycosylation is present at Asn137. His248 provides a ligand contact to Zn(2+). Residue Glu249 is part of the active site. Residues His252 and His258 each coordinate Zn(2+). Residues 301-329 (SPTAQPEEPPLLPEPPDNRSSAPPRKDVP) are disordered. A glycan (N-linked (GlcNAc...) asparagine) is linked at Asn318. Cys332 and Cys523 form a disulfide bridge. Hemopexin repeat units follow at residues 333 to 378 (STHF…WRGL), 382 to 427 (LDSV…FSLP), 428 to 475 (PGGI…WRGV), and 476 to 523 (PSTL…WLVC). A disordered region spans residues 537–571 (DAAEGPRAPPGQHDQSRSEDGYEVCSCTSGASSPP). Ser565 carries GPI-anchor amidated serine lipidation. Positions 566 to 603 (GASSPPGAPGPLVAATMLLLLPPLSPGALWTAAQALTL) are cleaved as a propeptide — removed in mature form.

Belongs to the peptidase M10A family. Zn(2+) serves as cofactor. Requires Ca(2+) as cofactor. Post-translationally, the precursor is cleaved by a furin endopeptidase. As to expression, expressed in brain, leukocytes, colon, ovary testis and breast cancer. Expressed also in many transformed and non-transformed cell types.

It is found in the cell membrane. The protein localises to the secreted. It localises to the extracellular space. The protein resides in the extracellular matrix. Its function is as follows. Endopeptidase that degrades various components of the extracellular matrix, such as fibrin. May be involved in the activation of membrane-bound precursors of growth factors or inflammatory mediators, such as tumor necrosis factor-alpha. May also be involved in tumoral process. Cleaves pro-TNF-alpha at the '74-Ala-|-Gln-75' site. Not obvious if able to proteolytically activate progelatinase A. Does not hydrolyze collagen types I, II, III, IV and V, gelatin, fibronectin, laminin, decorin nor alpha1-antitrypsin. The protein is Matrix metalloproteinase-17 (MMP17) of Homo sapiens (Human).